The sequence spans 904 residues: MDVLGENEALQQFFEAQGASGTLENPALDTSLLEEFLGNDFDLGALQRQLPDTPPYSASDPRSPPQVKGACCRTPRPPAGRIPAAFLHSTTAPGPLPEHPSQSMAGQTHSSFQNGYPESSHPATCRHQTGPSRLGTSCSFHQQPLCHVPGSSLPPTKKRKHSQIQEDSWDCSSWAHYFRPMTTRSQSIEVQDHDREGRNGMPVDQCSPALKWQPYQSVPWHSLLNSRYEKLPEVGYQVVTDKGFTFSPVDEAFVCQKKNHFQITVHIQVWGSPKFVKTQVGLKPIEKFYLKAFGIKVEATNQVIAIEQSQADRSKKTFDPVKIDLLTDQVTKVTLGRLHFSETTANNMRKKGKPNPDQRYFMLVVGLYAANQDQFYLLAAHISERIIVRASNPGQFENDSDALWQRGQVPESIVCHGRVGINTDTPDEALVVCGNMKVMGTVMHPSDSRVKENIQEVDTNEQLRRIAQMRIVQYDYKPEFASAMGINTAHQTGMIAQEVQEILPRAVREVGDVTGGNGETLENFLMVDKDQIFMENVGAVKQLCKLTNNLEERIEELEIWNKKLARLKRLSSSWKSSISEASSISKLSRAVSASSARRTGSKKPTKVSFSGRKQSCPNWVFQTLVVVLIAVMAFCALTIVALYILSLKDQDRRSPNLPLSNMTSSPEPALSSTAPTSAPHTTPETTQTSLQVPEITFCEILPCQETYCCPVWGPRILFSSPAQRQLEAEREIHQRQWAEDKSKSFLTSSALISPDWESDWIDTTIASIQIVEIQQMIDRRYCSRMLHCGPGHYNYNIPVNKNTPTNVKFSLEINTTEPLIVFQCKYTLGNICFRSQRERTQSDGEDAQMTQGYQHIWRLPVARFSDSAYHFRVAAPDLADCSTDPFFAGIFFTDYFFYFYRRCN.

The tract at residues 46–132 (LQRQLPDTPP…ATCRHQTGPS (87 aa)) is disordered. Residues 100-117 (PSQSMAGQTHSSFQNGYP) show a composition bias toward polar residues. The segment at residues 108 to 400 (THSSFQNGYP…SNPGQFENDS (293 aa)) is a DNA-binding region (NDT80). Residues 446–554 (SDSRVKENIQ…KLTNNLEERI (109 aa)) form the Peptidase S74 domain. Residues 538–575 (GAVKQLCKLTNNLEERIEELEIWNKKLARLKRLSSSWK) are a coiled coil. A helical membrane pass occupies residues 624-644 (LVVVLIAVMAFCALTIVALYI). Residues 656–688 (NLPLSNMTSSPEPALSSTAPTSAPHTTPETTQT) are disordered. A compositionally biased stretch (low complexity) spans 663 to 688 (TSSPEPALSSTAPTSAPHTTPETTQT).

The protein belongs to the MRF family.

It localises to the membrane. The protein is Myelin regulatory factor-like protein (Myrfl) of Mus musculus (Mouse).